The sequence spans 160 residues: MESPEGAGPGEITKEVKVPQAAPSVPAHETGDTCHTPVAAVEEEVGIPIPAPGFLQVTERRQPLSSVSSLEVHFDLLDLTELTDMSDQELAEVFADSDDENLATESPAGLHPLSRASCLRSPSWTKTRAEQNREKQTPSDPERQGTIVDTFLTVEEPKED.

Disordered regions lie at residues Met1 to Cys34 and Ala95 to Asp160. Ser3, Ser97, and Ser121 each carry phosphoserine. Positions Thr127–Arg143 are enriched in basic and acidic residues.

This sequence belongs to the dysbindin family.

This is Dysbindin domain-containing protein 1 (Dbndd1) from Rattus norvegicus (Rat).